We begin with the raw amino-acid sequence, 425 residues long: Putative dipeptidase MGYG_00085 (425 aa).

The N-terminal stretch at 1 to 31 (MAPERRSRLSETAGLFVSLLALTSIVPVQAV) is a signal peptide. Zn(2+) contacts are provided by His56, Asp58, and Glu168. Cys107 and Cys197 are oxidised to a cystine. Residue His195 coordinates substrate. Residues His239 and His260 each coordinate Zn(2+). Substrate contacts are provided by Arg271 and Asp331. An N-linked (GlcNAc...) asparagine glycan is attached at Asn403.

It belongs to the metallo-dependent hydrolases superfamily. Peptidase M19 family. Requires Zn(2+) as cofactor.

The enzyme catalyses an L-aminoacyl-L-amino acid + H2O = 2 an L-alpha-amino acid. In terms of biological role, hydrolyzes a wide range of dipeptides. This is Putative dipeptidase MGYG_00085 from Arthroderma gypseum (strain ATCC MYA-4604 / CBS 118893) (Microsporum gypseum).